The primary structure comprises 920 residues: Plasma membrane ATPase (920 aa).

Positions 1–11 (MSDERITEKPP) are enriched in basic and acidic residues. Residues 1-71 (MSDERITEKP…AEEDDGPAAA (71 aa)) form a disordered region. The Cytoplasmic portion of the chain corresponds to 1–117 (MSDERITEKP…REESENLLVK (117 aa)). The span at 17–50 (SEGEPVPEEEVEEETEEEVPDEQSSEDDDIDGLI) shows a compositional bias: acidic residues. Residues 118–138 (FLMFFIGPIQFVMEAAAVLAA) form a helical membrane-spanning segment. The Extracellular segment spans residues 139-142 (GLED). The chain crosses the membrane as a helical span at residues 143–162 (WVDFGVICGLLFLNAGVGFI). The Cytoplasmic portion of the chain corresponds to 163–293 (QEFQAGSIVE…GQGHFTEVLN (131 aa)). A helical membrane pass occupies residues 294–315 (GIGVILLVLVVITLLLIWTACF). The Extracellular portion of the chain corresponds to 316–326 (YRTVRIVPILR). A helical transmembrane segment spans residues 327-349 (YTLGITIVGVPVGLPAVVTTTMA). At 350-721 (GGAAYLAKKQ…IAILNHSLDI (372 aa)) the chain is on the cytoplasmic side. Asp-380 serves as the catalytic 4-aspartylphosphate intermediate. Residues Asp-636 and Asp-640 each coordinate Mg(2+). A helical membrane pass occupies residues 722–740 (DLIVFIAIFADVATLAIAY). The Extracellular portion of the chain corresponds to 741–756 (DNAPFSPSPVKWNLPR). A helical transmembrane segment spans residues 757-776 (LWGMSIMMGIILAAGTWITL). Topologically, residues 777-826 (TTMFLPKGGIIQNFGSIDGILFLEISLTENWLIFITRAVGPFWSSIPSWQ) are cytoplasmic. Residues 827–847 (LAGAVFVVDVVATMFTLFGWW) form a helical membrane-spanning segment. At 848 to 859 (SQNWTDIVTVVR) the chain is on the extracellular side. Residues 860–876 (IYIWSIGIFCCLGGAYY) form a helical membrane-spanning segment. The Cytoplasmic portion of the chain corresponds to 877–920 (LMSESETFDRLMNGKPLKENKSTRSVEDFLASMRRVSTQHEKGN).

Belongs to the cation transport ATPase (P-type) (TC 3.A.3) family. Type IIIA subfamily.

It localises to the cell membrane. The catalysed reaction is ATP + H2O + H(+)(in) = ADP + phosphate + 2 H(+)(out). In terms of biological role, the plasma membrane ATPase of plants and fungi is a hydrogen ion pump. The proton gradient it generates drives the active transport of nutrients by H(+)-symport. The resulting external acidification and/or internal alkinization may mediate growth responses. The chain is Plasma membrane ATPase from Zygosaccharomyces rouxii.